The chain runs to 390 residues: Chorismate synthase (390 aa).

Arg-39 and Arg-45 together coordinate NADP(+). Residues 132–134 (RSS), 253–254 (NA), Gly-298, 313–317 (KPIPT), and Arg-339 each bind FMN.

The protein belongs to the chorismate synthase family. As to quaternary structure, homotetramer. It depends on FMNH2 as a cofactor.

It carries out the reaction 5-O-(1-carboxyvinyl)-3-phosphoshikimate = chorismate + phosphate. The protein operates within metabolic intermediate biosynthesis; chorismate biosynthesis; chorismate from D-erythrose 4-phosphate and phosphoenolpyruvate: step 7/7. Catalyzes the anti-1,4-elimination of the C-3 phosphate and the C-6 proR hydrogen from 5-enolpyruvylshikimate-3-phosphate (EPSP) to yield chorismate, which is the branch point compound that serves as the starting substrate for the three terminal pathways of aromatic amino acid biosynthesis. This reaction introduces a second double bond into the aromatic ring system. This is Chorismate synthase from Shouchella clausii (strain KSM-K16) (Alkalihalobacillus clausii).